We begin with the raw amino-acid sequence, 82 residues long: Small ribosomal subunit protein bS16 (82 aa).

This sequence belongs to the bacterial ribosomal protein bS16 family.

This is Small ribosomal subunit protein bS16 from Shewanella sp. (strain MR-4).